The primary structure comprises 690 residues: Amino-acid acetyltransferase, mitochondrial (690 aa).

A disordered region spans residues 62 to 93 (RFPSVKKPKPPIPRQNQGAVETQSGKENEKPG). Positions 75 to 84 (RQNQGAVETQ) are enriched in polar residues. Residues 508 to 679 (DGHHLTLDDP…DYEAVCRSIQ (172 aa)) form the N-acetyltransferase domain.

It belongs to the acetyltransferase family.

It localises to the mitochondrion. It carries out the reaction L-glutamate + acetyl-CoA = N-acetyl-L-glutamate + CoA + H(+). The protein operates within amino-acid biosynthesis; L-arginine biosynthesis; N(2)-acetyl-L-ornithine from L-glutamate: step 1/4. Its function is as follows. N-acetylglutamate synthase involved in arginine biosynthesis. The polypeptide is Amino-acid acetyltransferase, mitochondrial (arg2) (Talaromyces stipitatus (strain ATCC 10500 / CBS 375.48 / QM 6759 / NRRL 1006) (Penicillium stipitatum)).